The sequence spans 127 residues: Large-conductance mechanosensitive channel (127 aa).

A run of 3 helical transmembrane segments spans residues 8 to 28, 30 to 50, and 70 to 90; these read FAFKGNVLDLAIGVIIGAAFG, IVTALVDVVIMPIISIILSLI, and IGVLIKTIIEFLIIAFVLFLF.

Belongs to the MscL family. As to quaternary structure, homopentamer.

The protein resides in the cell membrane. Functionally, channel that opens in response to stretch forces in the membrane lipid bilayer. May participate in the regulation of osmotic pressure changes within the cell. This chain is Large-conductance mechanosensitive channel, found in Herpetosiphon aurantiacus (strain ATCC 23779 / DSM 785 / 114-95).